A 430-amino-acid chain; its full sequence is Tektin-2 (430 aa).

Coiled coils occupy residues Lys-75 to Leu-162 and Lys-226 to Lys-380.

The protein belongs to the tektin family. In terms of assembly, microtubule inner protein component of sperm flagellar doublet microtubules. May interact with CCDC172. In terms of processing, tyrosine phosphorylated. Post-translationally, ubiquitinated, leading to its degradation. Deubiquitinated by USP16, promoting its stability.

Its subcellular location is the cytoplasm. The protein resides in the cytoskeleton. It is found in the cilium axoneme. It localises to the flagellum axoneme. The protein localises to the microtubule organizing center. Functionally, microtubule inner protein (MIP) part of the dynein-decorated doublet microtubules (DMTs) in cilia and flagellar axoneme. Plays a key role in the assembly or attachment of the inner dynein arm to microtubules in sperm flagella and tracheal cilia. Forms filamentous polymers in the walls of ciliary and flagellar microtubules. The polypeptide is Tektin-2 (Tekt2) (Rattus norvegicus (Rat)).